Consider the following 1290-residue polypeptide: Period circadian protein homolog 1 (1290 aa).

Residues 1 to 134 (MSGPLEGADG…SSEQSARART (134 aa)) form a disordered region. Residues 1–151 (MSGPLEGADG…LRELKLRLPP (151 aa)) are interaction with BTRC. Positions 25–38 (VPSPGPPQHRPCPG) are enriched in pro residues. 2 stretches are compositionally biased toward low complexity: residues 48-57 (NSNGSSGNES) and 64-115 (GASQ…ASSE). Over residues 116-132 (QDNPSTSGCSSEQSARA) the composition is skewed to polar residues. Phosphothreonine; by CSNK1E is present on Thr-121. Phosphoserine; by CSNK1E occurs at positions 122 and 126. The short motif at 138–147 (LMTALRELKL) is the Nuclear export signal 1 element. PAS domains lie at 208 to 275 (ITSE…PSRL) and 348 to 414 (YEAP…KILQ). In terms of domain architecture, PAC spans 422–465 (HSPIRFCARNGEYVTMDTSWAGFVHPWSRKVAFVLGRHKVRTAP). Positions 489-498 (LSEQIHRLLL) match the Nuclear export signal 2 motif. Disordered stretches follow at residues 508–544 (GLCG…PAPV) and 646–698 (TTKR…KEPV). Low complexity-rich tracts occupy residues 517–533 (SPGP…SNGG) and 652–662 (ASSSSYTTSSA). The required for phosphorylation by CSNK1E stretch occupies residues 596 to 815 (ELEAGSAPVQ…GLDSSSTAPS (220 aa)). 3 positions are modified to phosphoserine: Ser-661, Ser-663, and Ser-704. Disordered stretches follow at residues 749–772 (GLAP…APDA), 805–874 (RGLD…PPAT), and 938–977 (ALQT…FNSR). Pro residues predominate over residues 751 to 769 (APGPAPSPAPSPTVAPDPA). Ser-815 is subject to Phosphoserine. Residues 827 to 843 (APPSRRHHCRSKAKRSR) carry the Nuclear localization signal motif. Residues 830–847 (SRRHHCRSKAKRSRHHQN) are compositionally biased toward basic residues. Pro residues predominate over residues 860–874 (SPVPPSTPWPTPPAT). Low complexity predominate over residues 950–961 (ASHSPSPSLPAL). Ser-979 and Ser-980 each carry phosphoserine. The short motif at 982–989 (LQLNLLQL) is the Nuclear export signal 3 element. The disordered stretch occupies residues 996–1037 (EGAAVAGGPGSSAGPPPPSAEAAEPEARLAEVTESSNQDALS). Residues 1043 to 1047 (LELLL) carry the LXXLL motif. A compositionally biased stretch (low complexity) spans 1051 to 1062 (SRSGTGSAASGS). Disordered regions lie at residues 1051–1098 (SRSG…SKYF) and 1207–1290 (SSTQ…NCTS). Over residues 1063-1077 (LGSGLGSGSGSGSHE) the composition is skewed to gly residues. Over residues 1078–1095 (GGSTSASITRSSQSSHTS) the composition is skewed to low complexity. The tract at residues 1149 to 1290 (SRDMTSVLKQ…ALPTAGNCTS (142 aa)) is CRY binding domain. Residues 1236 to 1248 (GEQGSSGGGSGEG) are compositionally biased toward gly residues.

In terms of assembly, homodimer. Component of the circadian core oscillator, which includes the CRY proteins, CLOCK or NPAS2, BMAL1 or BMAL2, CSNK1D and/or CSNK1E, TIMELESS, and the PER proteins. Interacts directly with TIMELESS, PER2, PER3, CRY1 and CRY2. Interacts with BMAL1 and CLOCK. Interacts with GPRASP1. Interacts (phosphorylated) with BTRC and FBXW11; the interactions trigger proteasomal degradation. Interacts with NONO, WDR5 and SFPQ. Interacts with USP2. Interacts with HNF4A. Post-translationally, phosphorylated on serine residues by CSNK1D, CSNK1E and probably also by CSNK1G2. Phosphorylation by CSNK1D or CSNK1E promotes nuclear location of PER proteins as well as ubiquitination and subsequent degradation. May be dephosphorylated by PP1. In terms of processing, ubiquitinated; requires phosphorylation by CSNK1E and interaction with BTRC and FBXW11. Deubiquitinated by USP2. As to expression, widely expressed. Expressed in hair follicles (at protein level). Found in heart, brain, placenta, lung, liver, skeletal muscle, pancreas, kidney, spleen, thymus, prostate, testis, ovary and small intestine. Highest level in skeletal muscle.

Its subcellular location is the nucleus. It localises to the cytoplasm. Functionally, transcriptional repressor which forms a core component of the circadian clock. The circadian clock, an internal time-keeping system, regulates various physiological processes through the generation of approximately 24 hour circadian rhythms in gene expression, which are translated into rhythms in metabolism and behavior. It is derived from the Latin roots 'circa' (about) and 'diem' (day) and acts as an important regulator of a wide array of physiological functions including metabolism, sleep, body temperature, blood pressure, endocrine, immune, cardiovascular, and renal function. Consists of two major components: the central clock, residing in the suprachiasmatic nucleus (SCN) of the brain, and the peripheral clocks that are present in nearly every tissue and organ system. Both the central and peripheral clocks can be reset by environmental cues, also known as Zeitgebers (German for 'timegivers'). The predominant Zeitgeber for the central clock is light, which is sensed by retina and signals directly to the SCN. The central clock entrains the peripheral clocks through neuronal and hormonal signals, body temperature and feeding-related cues, aligning all clocks with the external light/dark cycle. Circadian rhythms allow an organism to achieve temporal homeostasis with its environment at the molecular level by regulating gene expression to create a peak of protein expression once every 24 hours to control when a particular physiological process is most active with respect to the solar day. Transcription and translation of core clock components (CLOCK, NPAS2, BMAL1, BMAL2, PER1, PER2, PER3, CRY1 and CRY2) plays a critical role in rhythm generation, whereas delays imposed by post-translational modifications (PTMs) are important for determining the period (tau) of the rhythms (tau refers to the period of a rhythm and is the length, in time, of one complete cycle). A diurnal rhythm is synchronized with the day/night cycle, while the ultradian and infradian rhythms have a period shorter and longer than 24 hours, respectively. Disruptions in the circadian rhythms contribute to the pathology of cardiovascular diseases, cancer, metabolic syndromes and aging. A transcription/translation feedback loop (TTFL) forms the core of the molecular circadian clock mechanism. Transcription factors, CLOCK or NPAS2 and BMAL1 or BMAL2, form the positive limb of the feedback loop, act in the form of a heterodimer and activate the transcription of core clock genes and clock-controlled genes (involved in key metabolic processes), harboring E-box elements (5'-CACGTG-3') within their promoters. The core clock genes: PER1/2/3 and CRY1/2 which are transcriptional repressors form the negative limb of the feedback loop and interact with the CLOCK|NPAS2-BMAL1|BMAL2 heterodimer inhibiting its activity and thereby negatively regulating their own expression. This heterodimer also activates nuclear receptors NR1D1/2 and RORA/B/G, which form a second feedback loop and which activate and repress BMAL1 transcription, respectively. Regulates circadian target genes expression at post-transcriptional levels, but may not be required for the repression at transcriptional level. Controls PER2 protein decay. Represses CRY2 preventing its repression on CLOCK/BMAL1 target genes such as FXYD5 and SCNN1A in kidney and PPARA in liver. Besides its involvement in the maintenance of the circadian clock, has an important function in the regulation of several processes. Participates in the repression of glucocorticoid receptor NR3C1/GR-induced transcriptional activity by reducing the association of NR3C1/GR to glucocorticoid response elements (GREs) by BMAL1:CLOCK. Plays a role in the modulation of the neuroinflammatory state via the regulation of inflammatory mediators release, such as CCL2 and IL6. In spinal astrocytes, negatively regulates the MAPK14/p38 and MAPK8/JNK MAPK cascades as well as the subsequent activation of NFkappaB. Coordinately regulates the expression of multiple genes that are involved in the regulation of renal sodium reabsorption. Can act as gene expression activator in a gene and tissue specific manner, in kidney enhances WNK1 and SLC12A3 expression in collaboration with CLOCK. Modulates hair follicle cycling. Represses the CLOCK-BMAL1 induced transcription of BHLHE40/DEC1. The sequence is that of Period circadian protein homolog 1 (PER1) from Homo sapiens (Human).